We begin with the raw amino-acid sequence, 530 residues long: UDP-glucuronosyltransferase 2B17 (530 aa).

Residues Met1–Cys23 form the signal peptide. N-linked (GlcNAc...) asparagine glycosylation is present at Asn65. Lys136 carries the post-translational modification N6-succinyllysine. N-linked (GlcNAc...) asparagine glycans are attached at residues Asn316 and Asn483. A helical transmembrane segment spans residues Ile495–Phe515.

The protein belongs to the UDP-glycosyltransferase family. Expressed in various tissues including the liver, kidney, testis, uterus, placenta, mammary gland, adrenal gland, skin and prostate.

Its subcellular location is the endoplasmic reticulum membrane. It catalyses the reaction glucuronate acceptor + UDP-alpha-D-glucuronate = acceptor beta-D-glucuronoside + UDP + H(+). The catalysed reaction is 17alpha-estradiol + UDP-alpha-D-glucuronate = 17alpha-estradiol 3-O-(beta-D-glucuronate) + UDP + H(+). The enzyme catalyses 17alpha-estradiol + UDP-alpha-D-glucuronate = 17alpha-estradiol 17-O-(beta-D-glucuronate) + UDP + H(+). It carries out the reaction 17beta-estradiol + UDP-alpha-D-glucuronate = 17beta-estradiol 17-O-(beta-D-glucuronate) + UDP + H(+). It catalyses the reaction 17beta-hydroxy-5alpha-androstan-3-one + UDP-alpha-D-glucuronate = 5alpha-dihydrotestosterone 17-O-(beta-D-glucuronate) + UDP + H(+). The catalysed reaction is testosterone + UDP-alpha-D-glucuronate = testosterone 17-O-(beta-D-glucuronate) + UDP + H(+). UDP-glucuronosyltransferase (UGT) that catalyzes phase II biotransformation reactions in which lipophilic substrates are conjugated with glucuronic acid to increase the metabolite's water solubility, thereby facilitating excretion into either the urine or bile. Catalyzes the glucuronidation of endogenous steroid hormones such as androgens (epitestosterone, androsterone) and estrogens (estradiol, epiestradiol). The protein is UDP-glucuronosyltransferase 2B17 of Homo sapiens (Human).